Here is a 1049-residue protein sequence, read N- to C-terminus: Protein phosphatase 1 regulatory subunit 12A (1049 aa).

ANK repeat units follow at residues 39–68, 72–101, 105–134, 138–164, 198–227, and 231–260; these read DDGAVFLAACSSGDTEEVLRMLDRGADINY, DGLTALHQACIDDNVDMVTFLVEHGACINQ, EGWIPLHAAASCGYLDIAEYLISQGASVGV, EGETPLDIAEEEAMEELLQNEINRQGV, SGGTALHVAAAKGYAEVLKLLIQAGYDVNI, and DGWTPLHAAAHWGKEEACRILVEHLCDMDV. The segment at 302–947 is disordered; the sequence is LIETTTTGDN…RPYSRFEKDD (646 aa). Polar residues predominate over residues 303-315; that stretch reads IETTTTGDNNQSV. Over residues 319 to 341 the composition is skewed to basic and acidic residues; that stretch reads KSKETLLLEPEKTAPRIETLEPE. Over residues 359 to 371 the composition is skewed to acidic residues; the sequence is SEEEEEEDSESEN. Residues 378–421 show a composition bias toward low complexity; it reads SSVPSSVSNSTPTTAPSSITVTSPTTPSNQVTTPTSPTKKVSTP. The span at 426–436 shows a compositional bias: basic and acidic residues; it reads SPKEEDRKDES. Residues 473–484 show a composition bias toward low complexity; it reads RSASSPRLSSSL. Residues 485–497 are compositionally biased toward basic and acidic residues; that stretch reads DNKDKEKEKEKTR. Over residues 545-564 the composition is skewed to polar residues; it reads SDGTASTNRTSSYQRSTSHT. Over residues 571–592 the composition is skewed to low complexity; that stretch reads SSSRDLPAKSSSASSLEPNNSK. Polar residues predominate over residues 593-607; sequence AWQPSSYYQSYSIHR. The segment covering 620–639 has biased composition (low complexity); that stretch reads SSTSSSTTTTTTTSSVTSPT. Positions 649-664 are enriched in basic and acidic residues; the sequence is WAEESAEKEKEKEKES. Low complexity predominate over residues 665 to 686; the sequence is ATVIPTINTAGTTTTTSTTGTV. Basic and acidic residues predominate over residues 702 to 711; that stretch reads VRDEESESQR. A compositionally biased stretch (basic residues) spans 712 to 722; the sequence is KARSRQARQSR. The span at 747–789 shows a compositional bias: basic and acidic residues; it reads RPREDEKEEKEKQDKEKQEEKKETETKEDDYRSRYRSFEEKYR. Low complexity predominate over residues 790–819; it reads TSLASSTTASSTIPSSSSSSSSSLYSTSSL. Residues 820 to 829 are compositionally biased toward polar residues; the sequence is NRPNSLTGLT. Residues 835–863 are compositionally biased toward basic and acidic residues; that stretch reads STRDTDRESDRKEKDEDRDGDDKSQPRSI. Basic residues predominate over residues 864-875; the sequence is RDRRRPREKRRS. Composition is skewed to basic and acidic residues over residues 890-906 and 934-947; these read PDHPSDSEGSTKGEPQS and GESRRPYSRFEKDD.

In terms of assembly, PP1 comprises a catalytic subunit, and one or several targeting or regulatory subunits. Ppp1r12a mediates binding to myosin.

It localises to the cytoplasm. Its function is as follows. Regulates myosin phosphatase activity. This is Protein phosphatase 1 regulatory subunit 12A (ppp1r12a) from Danio rerio (Zebrafish).